A 335-amino-acid polypeptide reads, in one-letter code: Methionine import ATP-binding protein MetN (335 aa).

One can recognise an ABC transporter domain in the interval 2–241; it reads IQFQRLHKSY…PKHATTRRFV (240 aa). 38–45 serves as a coordination point for ATP; the sequence is GHSGAGKS.

The protein belongs to the ABC transporter superfamily. Methionine importer (TC 3.A.1.24) family. In terms of assembly, the complex is composed of two ATP-binding proteins (MetN), two transmembrane proteins (MetI) and a solute-binding protein (MetQ).

It localises to the cell inner membrane. The enzyme catalyses L-methionine(out) + ATP + H2O = L-methionine(in) + ADP + phosphate + H(+). The catalysed reaction is D-methionine(out) + ATP + H2O = D-methionine(in) + ADP + phosphate + H(+). In terms of biological role, part of the ABC transporter complex MetNIQ involved in methionine import. Responsible for energy coupling to the transport system. The protein is Methionine import ATP-binding protein MetN of Xanthomonas euvesicatoria pv. vesicatoria (strain 85-10) (Xanthomonas campestris pv. vesicatoria).